Here is a 306-residue protein sequence, read N- to C-terminus: Ornithine carbamoyltransferase (306 aa).

Residues 51-54 (STRT), Gln78, Arg102, and 129-132 (HPCQ) each bind carbamoyl phosphate. Residues Asn160, Asp223, and 227-228 (SM) contribute to the L-ornithine site. Carbamoyl phosphate is bound by residues 263 to 264 (CL) and Arg291.

The protein belongs to the aspartate/ornithine carbamoyltransferase superfamily. OTCase family.

The protein localises to the cytoplasm. The enzyme catalyses carbamoyl phosphate + L-ornithine = L-citrulline + phosphate + H(+). It participates in amino-acid biosynthesis; L-arginine biosynthesis; L-arginine from L-ornithine and carbamoyl phosphate: step 1/3. Its function is as follows. Reversibly catalyzes the transfer of the carbamoyl group from carbamoyl phosphate (CP) to the N(epsilon) atom of ornithine (ORN) to produce L-citrulline. The chain is Ornithine carbamoyltransferase (argF) from Nostoc punctiforme (strain ATCC 29133 / PCC 73102).